We begin with the raw amino-acid sequence, 111 residues long: Putative protein p34 (111 aa).

The polypeptide is Putative protein p34 (34) (Acyrthosiphon pisum secondary endosymbiont phage 1 (Bacteriophage APSE-1)).